The sequence spans 360 residues: Phospho-N-acetylmuramoyl-pentapeptide-transferase (360 aa).

10 consecutive transmembrane segments (helical) span residues Ile27–Phe47, Thr71–Val91, Asn94–Val114, Trp132–Gly152, Val168–Ser188, Gly199–Thr219, Ala236–Phe256, Val263–Leu283, Phe288–Val308, and Val338–Lys358.

It belongs to the glycosyltransferase 4 family. MraY subfamily. Mg(2+) is required as a cofactor.

The protein localises to the cell inner membrane. The enzyme catalyses UDP-N-acetyl-alpha-D-muramoyl-L-alanyl-gamma-D-glutamyl-meso-2,6-diaminopimeloyl-D-alanyl-D-alanine + di-trans,octa-cis-undecaprenyl phosphate = di-trans,octa-cis-undecaprenyl diphospho-N-acetyl-alpha-D-muramoyl-L-alanyl-D-glutamyl-meso-2,6-diaminopimeloyl-D-alanyl-D-alanine + UMP. The protein operates within cell wall biogenesis; peptidoglycan biosynthesis. In terms of biological role, catalyzes the initial step of the lipid cycle reactions in the biosynthesis of the cell wall peptidoglycan: transfers peptidoglycan precursor phospho-MurNAc-pentapeptide from UDP-MurNAc-pentapeptide onto the lipid carrier undecaprenyl phosphate, yielding undecaprenyl-pyrophosphoryl-MurNAc-pentapeptide, known as lipid I. This is Phospho-N-acetylmuramoyl-pentapeptide-transferase from Photorhabdus laumondii subsp. laumondii (strain DSM 15139 / CIP 105565 / TT01) (Photorhabdus luminescens subsp. laumondii).